The following is a 197-amino-acid chain: 7-methyl-GTP pyrophosphatase (197 aa).

The active-site Proton acceptor is D79.

The protein belongs to the Maf family. YceF subfamily.

The protein localises to the cytoplasm. The catalysed reaction is N(7)-methyl-GTP + H2O = N(7)-methyl-GMP + diphosphate + H(+). Functionally, nucleoside triphosphate pyrophosphatase that hydrolyzes 7-methyl-GTP (m(7)GTP). May have a dual role in cell division arrest and in preventing the incorporation of modified nucleotides into cellular nucleic acids. The chain is 7-methyl-GTP pyrophosphatase from Dictyostelium discoideum (Social amoeba).